Here is a 395-residue protein sequence, read N- to C-terminus: Probable isocitrate dehydrogenase [NAD] gamma 2, mitochondrial (395 aa).

A mitochondrion-targeting transit peptide spans 1–25; the sequence is MLAAGSCSVRTILQPALLLGHSREV. Threonine 117 is a binding site for citrate. Residues arginine 133, arginine 164, and aspartate 251 each coordinate substrate. Residue aspartate 251 participates in Mn(2+) binding. Asparagine 321 contributes to the ADP binding site.

This sequence belongs to the isocitrate and isopropylmalate dehydrogenases family. Heterooligomer of subunits alpha (IDH3A), beta (IDH3B), and gamma (IDH3G) in the apparent ratio of 2:1:1. The heterodimer containing one IDH3A and one IDH3B subunit and the heterodimer containing one IDH3A and one IDH3G subunit assemble into a heterotetramer (which contains two subunits of IDH3A, one of IDH3B and one of IDH3G) and further into the heterooctamer. Mg(2+) is required as a cofactor. Requires Mn(2+) as cofactor.

It localises to the mitochondrion. With respect to regulation, the heterotetramer and the heterodimer composed of IDH3A and IDH3G subunits can be allosterically activated by citrate (CIT) or/and ADP, and the two activators can act independently or synergistically. The heterodimer composed of IDH3A and IDH3B subunits cannot be allosterically regulated and the allosteric regulation of the heterotetramer is through the IDH3G subunit and not the IDH3B subunit. The IDH3G subunit contains the allosteric site which consists of a CIT-binding site and an ADP-binding site, and the binding of CIT and ADP causes conformational changes at the allosteric site which are transmitted to the active site in the catalytic subunit (IDH3A) through a cascade of conformational changes at the heterodimer interface, leading to stabilization of the isocitrate-binding at the active site and thus activation of the enzyme. ATP can activate the heterotetramer and the heterodimer composed of IDH3A and IDH3G subunits at low concentrations but inhibits their activities at high concentrations, whereas ATP exhibits only inhibitory effect on the heterodimer composed of IDH3A and IDH3B subunits. In terms of biological role, regulatory subunit which plays a role in the allosteric regulation of the enzyme catalyzing the decarboxylation of isocitrate (ICT) into alpha-ketoglutarate. The heterodimer composed of the alpha (IDH3A) and beta (IDH3B) subunits and the heterodimer composed of the alpha (IDH3A) and gamma (IDH3G) subunits, have considerable basal activity but the full activity of the heterotetramer (containing two subunits of IDH3A, one of IDH3B and one of IDH3G) requires the assembly and cooperative function of both heterodimers. The chain is Probable isocitrate dehydrogenase [NAD] gamma 2, mitochondrial from Rattus norvegicus (Rat).